A 92-amino-acid chain; its full sequence is DLELRQCLPCGPGGKGRCFGPSICCGDELGCFVGTAEALRCQEENYLPSPCQSGQKPCGSGGRCAAAGICCNDESCVTEPECREGAGLPRRA.

Cystine bridges form between C7/C51, C10/C24, C18/C41, C25/C31, C58/C70, C64/C82, and C71/C76.

It belongs to the vasopressin/oxytocin family.

It is found in the secreted. Its function is as follows. Neurophysin 2 specifically binds the midbrain peptide hormone vasopressin. This Equus caballus (Horse) protein is Neurophysin 2 (AVP).